The primary structure comprises 196 residues: Peptide methionine sulfoxide reductase (196 aa).

A compositionally biased stretch (polar residues) spans 1–14 (MEGNNSSSKSTTNP). The interval 1 to 23 (MEGNNSSSKSTTNPALDPDLDSP) is disordered.

It belongs to the MsrA Met sulfoxide reductase family.

The enzyme catalyses L-methionyl-[protein] + [thioredoxin]-disulfide + H2O = L-methionyl-(S)-S-oxide-[protein] + [thioredoxin]-dithiol. The catalysed reaction is [thioredoxin]-disulfide + L-methionine + H2O = L-methionine (S)-S-oxide + [thioredoxin]-dithiol. Functionally, has an important function as a repair enzyme for proteins that have been inactivated by oxidation. Catalyzes the reversible oxidation-reduction of methionine sulfoxide in proteins to methionine. The protein is Peptide methionine sulfoxide reductase (E4) of Solanum lycopersicum (Tomato).